Here is a 546-residue protein sequence, read N- to C-terminus: Glucose-6-phosphate isomerase 1 (546 aa).

Residue Glu353 is the Proton donor of the active site. Catalysis depends on residues His384 and Lys512.

It belongs to the GPI family.

The protein resides in the cytoplasm. The catalysed reaction is alpha-D-glucose 6-phosphate = beta-D-fructose 6-phosphate. The protein operates within carbohydrate biosynthesis; gluconeogenesis. It participates in carbohydrate degradation; glycolysis; D-glyceraldehyde 3-phosphate and glycerone phosphate from D-glucose: step 2/4. Functionally, catalyzes the reversible isomerization of glucose-6-phosphate to fructose-6-phosphate. The protein is Glucose-6-phosphate isomerase 1 of Colwellia psychrerythraea (strain 34H / ATCC BAA-681) (Vibrio psychroerythus).